A 359-amino-acid chain; its full sequence is Histidinol-phosphate aminotransferase (359 aa).

Residue lysine 212 is modified to N6-(pyridoxal phosphate)lysine.

The protein belongs to the class-II pyridoxal-phosphate-dependent aminotransferase family. Histidinol-phosphate aminotransferase subfamily. In terms of assembly, homodimer. The cofactor is pyridoxal 5'-phosphate.

The catalysed reaction is L-histidinol phosphate + 2-oxoglutarate = 3-(imidazol-4-yl)-2-oxopropyl phosphate + L-glutamate. Its pathway is amino-acid biosynthesis; L-histidine biosynthesis; L-histidine from 5-phospho-alpha-D-ribose 1-diphosphate: step 7/9. The chain is Histidinol-phosphate aminotransferase from Buchnera aphidicola subsp. Schlechtendalia chinensis.